A 153-amino-acid polypeptide reads, in one-letter code: Large ribosomal subunit protein uL15 (153 aa).

A disordered region spans residues 1–42; that stretch reads MRLNTIKPGMGSTKPRRRVGRGIGSGLGKTCGRGHKGQKSRA. Residues 21-31 show a composition bias toward gly residues; that stretch reads RGIGSGLGKTC.

It belongs to the universal ribosomal protein uL15 family. As to quaternary structure, part of the 50S ribosomal subunit.

Its function is as follows. Binds to the 23S rRNA. The polypeptide is Large ribosomal subunit protein uL15 (Nitrosomonas eutropha (strain DSM 101675 / C91 / Nm57)).